The primary structure comprises 658 residues: Threonine--tRNA ligase (658 aa).

Residues 1 to 64 (MSFSISLSFP…EQSGQVEIIT (64 aa)) enclose the TGS domain. The catalytic stretch occupies residues 246–549 (DHRRLGREMD…LIENFAGHMP (304 aa)). Zn(2+)-binding residues include Cys-343, His-394, and His-526.

It belongs to the class-II aminoacyl-tRNA synthetase family. Homodimer. The cofactor is Zn(2+).

It localises to the cytoplasm. It carries out the reaction tRNA(Thr) + L-threonine + ATP = L-threonyl-tRNA(Thr) + AMP + diphosphate + H(+). In terms of biological role, catalyzes the attachment of threonine to tRNA(Thr) in a two-step reaction: L-threonine is first activated by ATP to form Thr-AMP and then transferred to the acceptor end of tRNA(Thr). Also edits incorrectly charged L-seryl-tRNA(Thr). The protein is Threonine--tRNA ligase of Bartonella bacilliformis (strain ATCC 35685 / KC583 / Herrer 020/F12,63).